The chain runs to 50 residues: Small, acid-soluble spore protein K (50 aa).

Positions 1–50 are disordered; that stretch reads MVRNKAKGFPNQNNNKFEGEPRAKDDYASKRADGSINSHPQERMRASGRR. 2 stretches are compositionally biased toward basic and acidic residues: residues 17 to 33 and 40 to 50; these read FEGE…KRAD and PQERMRASGRR.

The protein belongs to the SspK family.

Its subcellular location is the spore core. The polypeptide is Small, acid-soluble spore protein K (Bacillus velezensis (strain DSM 23117 / BGSC 10A6 / LMG 26770 / FZB42) (Bacillus amyloliquefaciens subsp. plantarum)).